Reading from the N-terminus, the 109-residue chain is MSDNPDTHDLNSDVLRLYSSTGHEFVLSRKMSYVSGTIKSMLSGDNSNFMEDQNNEIRFREISTPVLEKVIQYFYFKNKYTNSTTDLPEFPINEKVVVDLLLAAHFLDT.

The protein belongs to the SKP1 family.

The protein localises to the nucleus. Its function is as follows. SIII, also known as elongin, is a general transcription elongation factor that increases the RNA polymerase II transcription elongation past template-encoded arresting sites. Subunit A is transcriptionally active and its transcription activity is strongly enhanced by binding to the dimeric complex of the SIII regulatory subunits B and C (elongin BC complex). In terms of biological role, the elongin BC complex seems to be involved as an adapter protein in the proteasomal degradation of target proteins via different E3 ubiquitin ligase complexes. This Dictyostelium discoideum (Social amoeba) protein is Elongin-C (tceb1).